The primary structure comprises 290 residues: Phosphate import ATP-binding protein PstB (290 aa).

The 243-residue stretch at 43–285 (MSVRNLNVYY…PEHELTEAYI (243 aa)) folds into the ABC transporter domain. ATP is bound at residue 75 to 82 (GPSGCGKS).

It belongs to the ABC transporter superfamily. Phosphate importer (TC 3.A.1.7) family. As to quaternary structure, the complex is composed of two ATP-binding proteins (PstB), two transmembrane proteins (PstC and PstA) and a solute-binding protein (PstS).

It is found in the cell inner membrane. It carries out the reaction phosphate(out) + ATP + H2O = ADP + 2 phosphate(in) + H(+). Its function is as follows. Part of the ABC transporter complex PstSACB involved in phosphate import. Responsible for energy coupling to the transport system. In Pseudoalteromonas atlantica (strain T6c / ATCC BAA-1087), this protein is Phosphate import ATP-binding protein PstB.